The following is a 341-amino-acid chain: Keratin-associated protein 29-1 (341 aa).

7 tandem repeats follow at residues 5–9 (CCPGN), 115–119 (CCQEK), 120–124 (CCDAS), 150–154 (CCDAG), 240–244 (CCVPS), 276–280 (CCKPA), and 307–311 (CCVTG). The 7 X 5 AA repeats of C-C-X(3) stretch occupies residues 5–311 (CCPGNTTAIP…GCKSACCVTG (307 aa)).

The protein belongs to the KRTAP type 10 family.

This is Keratin-associated protein 29-1 (KRTAP29-1) from Homo sapiens (Human).